We begin with the raw amino-acid sequence, 308 residues long: Ribosomal RNA small subunit methyltransferase H (308 aa).

Residues 36-38, Asp55, Phe86, Asp103, and Gln110 each bind S-adenosyl-L-methionine; that span reads GGH.

The protein belongs to the methyltransferase superfamily. RsmH family.

Its subcellular location is the cytoplasm. It catalyses the reaction cytidine(1402) in 16S rRNA + S-adenosyl-L-methionine = N(4)-methylcytidine(1402) in 16S rRNA + S-adenosyl-L-homocysteine + H(+). In terms of biological role, specifically methylates the N4 position of cytidine in position 1402 (C1402) of 16S rRNA. The chain is Ribosomal RNA small subunit methyltransferase H from Helicobacter pylori (strain G27).